The sequence spans 742 residues: Serine/threonine-protein kinase SKY1 (742 aa).

Residues 13–146 (KSAHLADTST…KDYRPGGYHP (134 aa)) form a disordered region. The segment covering 19–35 (DTSTDASISCEEATSSQ) has biased composition (polar residues). Over residues 56 to 73 (TKSKLSLALQTSKSSSSA) the composition is skewed to low complexity. Over residues 81 to 101 (TSSKTEDFSTKSIKKKPDSGV) the composition is skewed to basic and acidic residues. The segment covering 106-127 (SIQSDSGPQSDSDLDSDSSISS) has biased composition (low complexity). The span at 128 to 140 (CDERNEESLKDYR) shows a compositional bias: basic and acidic residues. Residues 158–706 (YILVRKLGWG…AGGLVNHPWL (549 aa)) enclose the Protein kinase domain. Residues 164-172 (LGWGHFSTV) and Lys187 each bind ATP. The active-site Proton acceptor is the Asp294. 2 positions are modified to phosphothreonine: Thr383 and Thr386. 8 positions are modified to phosphoserine: Ser388, Ser393, Ser410, Ser427, Ser432, Ser445, Ser449, and Ser453. A disordered region spans residues 459–491 (INEDSNDNNNNDNSKNKNNNNNNSNNNNNEDIM). A compositionally biased stretch (low complexity) spans 465–489 (DNNNNDNSKNKNNNNNNSNNNNNED).

It belongs to the protein kinase superfamily. Ser/Thr protein kinase family.

It carries out the reaction L-seryl-[protein] + ATP = O-phospho-L-seryl-[protein] + ADP + H(+). It catalyses the reaction L-threonyl-[protein] + ATP = O-phospho-L-threonyl-[protein] + ADP + H(+). Functionally, constitutively active kinase, specifically and sequentially phosphorylates serine/arginine (SR)-type shuttling mRNA binding proteins in their RS dipeptide repeats. In Saccharomyces cerevisiae (strain ATCC 204508 / S288c) (Baker's yeast), this protein is Serine/threonine-protein kinase SKY1 (SKY1).